Reading from the N-terminus, the 318-residue chain is Trans-prenyltransferase (318 aa).

Residues 1-21 (MLHLIYISIIVVLIIILISYT) form a helical membrane-spanning segment. Isopentenyl diphosphate is bound by residues lysine 85, arginine 88, and histidine 122. Aspartate 129 and aspartate 135 together coordinate Mg(2+). Arginine 140 contacts dimethylallyl diphosphate. Arginine 141 contacts isopentenyl diphosphate. 3 residues coordinate dimethylallyl diphosphate: lysine 216, threonine 217, and glutamine 254.

It belongs to the FPP/GGPP synthase family. Asfivirus trans-prenyltransferase subfamily. Mg(2+) serves as cofactor.

Its subcellular location is the host endoplasmic reticulum. It localises to the host membrane. It catalyses the reaction isopentenyl diphosphate + dimethylallyl diphosphate = (2E)-geranyl diphosphate + diphosphate. The enzyme catalyses isopentenyl diphosphate + (2E)-geranyl diphosphate = (2E,6E)-farnesyl diphosphate + diphosphate. The catalysed reaction is isopentenyl diphosphate + (2E,6E)-farnesyl diphosphate = (2E,6E,10E)-geranylgeranyl diphosphate + diphosphate. It carries out the reaction isopentenyl diphosphate + (2E,6E,10E)-geranylgeranyl diphosphate = (2E,6E,10E,14E)-geranylfarnesyl diphosphate + diphosphate. It functions in the pathway isoprenoid biosynthesis; farnesyl diphosphate biosynthesis; farnesyl diphosphate from geranyl diphosphate and isopentenyl diphosphate: step 1/1. Its pathway is isoprenoid biosynthesis; geranyl diphosphate biosynthesis; geranyl diphosphate from dimethylallyl diphosphate and isopentenyl diphosphate: step 1/1. The protein operates within isoprenoid biosynthesis; geranylgeranyl diphosphate biosynthesis; geranylgeranyl diphosphate from farnesyl diphosphate and isopentenyl diphosphate: step 1/1. Its function is as follows. Trans-prenyltransferase that catalyzes the sequential condensation of isopentenyl diphosphate (IPP) with different allylic diphosphates, such as dimethylallyl diphosphate (DMAPP), geranyl diphosphate (GPP), farnesyl diphosphate (FPP) and geranylgeranyl diphosphate (GGPP), farnesyl diphosphate being the best allylic substrate. The polypeptide is Trans-prenyltransferase (African swine fever virus (isolate Tick/South Africa/Pretoriuskop Pr4/1996) (ASFV)).